Consider the following 221-residue polypeptide: Octanoyltransferase (221 aa).

The BPL/LPL catalytic domain maps to 14–202 (GVRPDTLWFL…MLGARNAPHP (189 aa)). Residues 54–61 (RGGLLTYH), 128–130 (SIG), and 141–143 (GFA) each bind substrate. Cys-159 acts as the Acyl-thioester intermediate in catalysis. The segment at 197–221 (RNAPHPPAPNLSSGDLGTGTRAGRT) is disordered.

The protein belongs to the LipB family.

It is found in the cytoplasm. The catalysed reaction is octanoyl-[ACP] + L-lysyl-[protein] = N(6)-octanoyl-L-lysyl-[protein] + holo-[ACP] + H(+). Its pathway is protein modification; protein lipoylation via endogenous pathway; protein N(6)-(lipoyl)lysine from octanoyl-[acyl-carrier-protein]: step 1/2. Functionally, catalyzes the transfer of endogenously produced octanoic acid from octanoyl-acyl-carrier-protein onto the lipoyl domains of lipoate-dependent enzymes. Lipoyl-ACP can also act as a substrate although octanoyl-ACP is likely to be the physiological substrate. In Frankia casuarinae (strain DSM 45818 / CECT 9043 / HFP020203 / CcI3), this protein is Octanoyltransferase.